Reading from the N-terminus, the 81-residue chain is Kappa-theraphotoxin-Gr2c (81 aa).

The N-terminal stretch at 1–19 (MKAFFVILGLALLCAYSFA) is a signal peptide. The propeptide occupies 20-50 (LEEQDQLSLRNDLLTVMFAENSELTPETEER). Disulfide bonds link C52–C66, C59–C71, and C65–C75.

The protein belongs to the neurotoxin 30 (phrixotoxin) family. Expressed by the venom gland.

It localises to the secreted. Inhibits sodium channels Nav1.1/SCN1A (IC(50)=5.7 uM), Nav1.2/SCN2A (IC(50)=12 uM), Nav1.4/SCN4A (IC(50)=4 uM), Nav1.6/SCN8A (IC(50)=6.6 uM), Nav1.7/SCN9A (IC(50)=13.6-1030 nM), potassium channels Kv11.1/KCNH2 (IC(50)=4.7 uM), as well as high-voltage-gated calcium channels Cav1.2/CACNA1C (IC(50)= nM). Also blocks mechanosensitive ion channels (also named stretch-activated channels or SACs) and the hypotonic cell swelling induced calcium increase associated with the activation of such channels. It can thus be useful in treating cardiac ventricular disturbances. Also induces analgesia in mammals. The chain is Kappa-theraphotoxin-Gr2c from Grammostola rosea (Chilean rose tarantula).